We begin with the raw amino-acid sequence, 162 residues long: Shikimate kinase (162 aa).

ATP is bound at residue 11–16 (GSGKSS). A Mg(2+)-binding site is contributed by S15. Residues D33, R57, and G80 each contribute to the substrate site. R116 provides a ligand contact to ATP. Position 132 (R132) interacts with substrate.

It belongs to the shikimate kinase family. As to quaternary structure, monomer. Mg(2+) is required as a cofactor.

Its subcellular location is the cytoplasm. It catalyses the reaction shikimate + ATP = 3-phosphoshikimate + ADP + H(+). It functions in the pathway metabolic intermediate biosynthesis; chorismate biosynthesis; chorismate from D-erythrose 4-phosphate and phosphoenolpyruvate: step 5/7. Its function is as follows. Catalyzes the specific phosphorylation of the 3-hydroxyl group of shikimic acid using ATP as a cosubstrate. This Helicobacter pylori (strain HPAG1) protein is Shikimate kinase.